The following is a 310-amino-acid chain: ADP-L-glycero-D-manno-heptose-6-epimerase (310 aa).

NADP(+) contacts are provided by residues 10 to 11 (FI), 31 to 32 (DN), Lys38, Lys53, 75 to 79 (EGACS), and Asn92. Residue Tyr140 is the Proton acceptor of the active site. Lys144 provides a ligand contact to NADP(+). Substrate is bound at residue Asn169. NADP(+) contacts are provided by Val170 and Lys178. Catalysis depends on Lys178, which acts as the Proton acceptor. Residues Ser180, His187, 201–204 (FEGS), Arg209, and Tyr272 contribute to the substrate site.

Belongs to the NAD(P)-dependent epimerase/dehydratase family. HldD subfamily. Homopentamer. NADP(+) is required as a cofactor.

It carries out the reaction ADP-D-glycero-beta-D-manno-heptose = ADP-L-glycero-beta-D-manno-heptose. The protein operates within nucleotide-sugar biosynthesis; ADP-L-glycero-beta-D-manno-heptose biosynthesis; ADP-L-glycero-beta-D-manno-heptose from D-glycero-beta-D-manno-heptose 7-phosphate: step 4/4. Functionally, catalyzes the interconversion between ADP-D-glycero-beta-D-manno-heptose and ADP-L-glycero-beta-D-manno-heptose via an epimerization at carbon 6 of the heptose. The sequence is that of ADP-L-glycero-D-manno-heptose-6-epimerase from Citrobacter koseri (strain ATCC BAA-895 / CDC 4225-83 / SGSC4696).